The primary structure comprises 300 residues: NADH-cytochrome b5 reductase 2 (300 aa).

Residues 12 to 29 form a helical membrane-spanning segment; it reads FVYPLVGATIGSIGLAYY. An FAD-binding FR-type domain is found at 49–153; the sequence is DQWIDLKLKK…KGPVVKWKWE (105 aa). 156–191 serves as a coordination point for FAD; it reads QFKSIALIGGGTGITPLYQLLREITSNPEDKTKVSL.

The protein belongs to the flavoprotein pyridine nucleotide cytochrome reductase family. It depends on FAD as a cofactor.

It is found in the mitochondrion outer membrane. It carries out the reaction 2 Fe(III)-[cytochrome b5] + NADH = 2 Fe(II)-[cytochrome b5] + NAD(+) + H(+). Functionally, may mediate the reduction of outer membrane cytochrome b5. This chain is NADH-cytochrome b5 reductase 2 (MCR1), found in Lodderomyces elongisporus (strain ATCC 11503 / CBS 2605 / JCM 1781 / NBRC 1676 / NRRL YB-4239) (Yeast).